Consider the following 414-residue polypeptide: MTIKGNRMRLSSDSLSHHLSPSLADNSVVCLMAPTASGKTNLAYELYDSGRYELISVDSALVYRDMTVGTAKPNAAELARYPHHLVDIIDPMQSYSVAEFVSDVARLIDSCHQNGKIPLLVGGTMMYYMALLDGLSPVPVSDDSVRARVEQWRQDEGISALYDYLGKVDAISHERLNATDTQRITRAVEVYLQTNIPISDWQRQPKQALAHNPNQQWHALAVMPDRPWLHTRIEQRLDIMWREGLVEEVISLLERYPLTPSLPSMRCVGYRQVLEYLVQINHPVFEQSHLDKAQFYDAFAQSNLSSVESNEQDATTQSGMTQTHLSVATDQTEALACQQMQNKALYATRQLAKRQYTWLRKVMQLSDTAAEQATVSSAAPSTSIIGFDDMTASQNDKLILHSFITMEQARAYLC.

Position 33 to 40 (33 to 40 (APTASGKT)) interacts with ATP. 35–40 (TASGKT) is a substrate binding site. Interaction with substrate tRNA regions lie at residues 58–61 (DSAL), 182–186 (QRITR), and 266–271 (RCVGYR).

The protein belongs to the IPP transferase family. Monomer. Mg(2+) is required as a cofactor.

The catalysed reaction is adenosine(37) in tRNA + dimethylallyl diphosphate = N(6)-dimethylallyladenosine(37) in tRNA + diphosphate. Catalyzes the transfer of a dimethylallyl group onto the adenine at position 37 in tRNAs that read codons beginning with uridine, leading to the formation of N6-(dimethylallyl)adenosine (i(6)A). This chain is tRNA dimethylallyltransferase, found in Psychrobacter arcticus (strain DSM 17307 / VKM B-2377 / 273-4).